Here is a 294-residue protein sequence, read N- to C-terminus: NAD kinase (294 aa).

Asp-73 (proton acceptor) is an active-site residue. NAD(+) is bound by residues Asp-73 to Gly-74, Asn-147 to Glu-148, His-158, Arg-175, Asp-177, Thr-188 to Ser-193, and Gln-249.

The protein belongs to the NAD kinase family. The cofactor is a divalent metal cation.

It is found in the cytoplasm. It carries out the reaction NAD(+) + ATP = ADP + NADP(+) + H(+). Involved in the regulation of the intracellular balance of NAD and NADP, and is a key enzyme in the biosynthesis of NADP. Catalyzes specifically the phosphorylation on 2'-hydroxyl of the adenosine moiety of NAD to yield NADP. The polypeptide is NAD kinase (Aeromonas salmonicida (strain A449)).